The chain runs to 421 residues: Tyrosine--tRNA ligase (421 aa).

L-tyrosine is bound at residue Tyr42. Residues 47-56 carry the 'HIGH' region motif; the sequence is CTAPSLHVGS. 2 residues coordinate L-tyrosine: Tyr179 and Gln183. The 'KMSKS' region motif lies at 239–243; it reads KMGKT. Lys242 contributes to the ATP binding site. The region spanning 354-419 is the S4 RNA-binding domain; sequence LGILAAFAKA…RKKHVLLRLA (66 aa).

Belongs to the class-I aminoacyl-tRNA synthetase family. TyrS type 1 subfamily. In terms of assembly, homodimer.

It localises to the cytoplasm. It carries out the reaction tRNA(Tyr) + L-tyrosine + ATP = L-tyrosyl-tRNA(Tyr) + AMP + diphosphate + H(+). In terms of biological role, catalyzes the attachment of tyrosine to tRNA(Tyr) in a two-step reaction: tyrosine is first activated by ATP to form Tyr-AMP and then transferred to the acceptor end of tRNA(Tyr). This chain is Tyrosine--tRNA ligase, found in Beijerinckia indica subsp. indica (strain ATCC 9039 / DSM 1715 / NCIMB 8712).